A 173-amino-acid polypeptide reads, in one-letter code: RNA pyrophosphohydrolase (173 aa).

Positions 6–149 (GYRPNVGIIL…KRHVYRRALR (144 aa)) constitute a Nudix hydrolase domain. A Nudix box motif is present at residues 38-59 (GGIRRDESPLDAMYRELAEETG).

It belongs to the Nudix hydrolase family. RppH subfamily. It depends on a divalent metal cation as a cofactor.

Its function is as follows. Accelerates the degradation of transcripts by removing pyrophosphate from the 5'-end of triphosphorylated RNA, leading to a more labile monophosphorylated state that can stimulate subsequent ribonuclease cleavage. This chain is RNA pyrophosphohydrolase, found in Thioalkalivibrio sulfidiphilus (strain HL-EbGR7).